The chain runs to 305 residues: Heat stress transcription factor B-4d (305 aa).

The segment at 201 to 230 (LRRRNSLLLSELAHMRKLYNDIIYFLQNHV) is hydrophobic repeat HR-A/B. The Nuclear localization signal motif lies at 286–289 (KKRR). The interval 286-305 (KKRRVQLVQEDEGDEQGSEG) is disordered. The span at 294 to 305 (QEDEGDEQGSEG) shows a compositional bias: acidic residues.

This sequence belongs to the HSF family. Class B subfamily. In terms of assembly, homotrimer. Exhibits temperature-dependent phosphorylation.

Its subcellular location is the nucleus. Its function is as follows. Transcriptional regulator that specifically binds DNA of heat shock promoter elements (HSE). The chain is Heat stress transcription factor B-4d (HSFB4D) from Oryza sativa subsp. japonica (Rice).